The chain runs to 563 residues: Src substrate protein p85 (563 aa).

6 Cortactin repeats span residues 89-125 (ASHGYGGKFGVEQDRMDKSAVGHEYQSKLSKHCSQVD), 126-162 (SVKGFGGKFGVQTDRVDQSAVGFEYQGKTEKHASQKD), 163-199 (YSSGFGGKYGVQADRVDKSAVGFDYQGKTEKHESQKD), 200-236 (YSKGFGGKYGVDKDKVDKSAVGFEYQGKTEKHESQKD), 237-273 (YVKGFGGKFGVQTDRQDKCALGWDHQEKVQLHESQKD), and 274-310 (YKSGFGGKFGVQTERQDPSAVGFDYKEKLAKHESQQD). The Cortactin 7; truncated repeat unit spans residues 311 to 333 (YSKGFGGKYGVQKDRMDKNAATF). The interval 331 to 477 (ATFEDIEKPT…EAVSQREAEY (147 aa)) is disordered. A coiled-coil region spans residues 349–410 (VERVANKTSS…EEQAKAKKQT (62 aa)). Basic and acidic residues predominate over residues 366–405 (LAKEKEQEDRRKAEAERAQRMAREKQEQEEARRKLEEQAK). Positions 505–563 (ELGITAIALYDYQAAGDDEISFDPDDIITNIEMIDDGWWRGVCKGRYGLFPANYVELRQ) constitute an SH3 domain.

In terms of processing, acetylated. In normal cells, appears to be phosphorylated on serine and threonine; in cells expressing activated forms of pp60-src, they become heavily phosphorylated on tyrosine in vitro. Tyrosine phosphorylation in transformed cells may contribute to cellular growth regulation and transformation.

The protein localises to the cytoplasm. It localises to the cytoskeleton. It is found in the cell projection. The protein resides in the lamellipodium. Its subcellular location is the ruffle. The protein localises to the dendrite. It localises to the cell membrane. It is found in the podosome. The protein resides in the cell junction. Its subcellular location is the focal adhesion. The protein localises to the membrane. It localises to the clathrin-coated pit. It is found in the dendritic spine. The protein resides in the cell cortex. Its subcellular location is the endoplasmic reticulum. In terms of biological role, contributes to the organization of the actin cytoskeleton and cell shape. Plays a role in the formation of lamellipodia and in cell migration. Plays a role in the regulation of neuron morphology, axon growth and formation of neuronal growth cones, and may play a role in the regulation of neuronal spine density. Plays a role in focal adhesion assembly and turnover. Plays a role in intracellular protein transport and endocytosis, and in modulating the levels of potassium channels present at the cell membrane. Plays a role in endocytosis via clathrin-coated pits. This chain is Src substrate protein p85 (CTTN1), found in Gallus gallus (Chicken).